The following is a 757-amino-acid chain: 5-methyltetrahydropteroyltriglutamate--homocysteine methyltransferase (757 aa).

5-methyltetrahydropteroyltri-L-glutamate contacts are provided by residues 16–19 (RELK) and K112. Residues 433–435 (IGS) and E486 each bind L-homocysteine. L-methionine is bound by residues 433-435 (IGS) and E486. 5-methyltetrahydropteroyltri-L-glutamate is bound by residues 517-518 (RC) and W563. D601 is a binding site for L-homocysteine. Residue D601 participates in L-methionine binding. Residue E607 coordinates 5-methyltetrahydropteroyltri-L-glutamate. The Zn(2+) site is built by H643, C645, and E667. The active-site Proton donor is H696. A Zn(2+)-binding site is contributed by C728.

Belongs to the vitamin-B12 independent methionine synthase family. Zn(2+) serves as cofactor.

It catalyses the reaction 5-methyltetrahydropteroyltri-L-glutamate + L-homocysteine = tetrahydropteroyltri-L-glutamate + L-methionine. It participates in amino-acid biosynthesis; L-methionine biosynthesis via de novo pathway; L-methionine from L-homocysteine (MetE route): step 1/1. Catalyzes the transfer of a methyl group from 5-methyltetrahydrofolate to homocysteine resulting in methionine formation. The polypeptide is 5-methyltetrahydropteroyltriglutamate--homocysteine methyltransferase (Histophilus somni (strain 2336) (Haemophilus somnus)).